Reading from the N-terminus, the 98-residue chain is MPVIYINLIAAFFMAFMGLLIYRSHLMSSLLCLEGMMLSLFILNSTLALSMHFTLYSMMPIILLVFAACEAALGLSLLVMVSNTYGLDYVQNLNLLQC.

3 consecutive transmembrane segments (helical) span residues 1 to 21 (MPVI…GLLI), 29 to 49 (SLLC…TLAL), and 61 to 81 (IILL…LVMV).

It belongs to the complex I subunit 4L family. Core subunit of respiratory chain NADH dehydrogenase (Complex I) which is composed of 45 different subunits.

It localises to the mitochondrion inner membrane. The enzyme catalyses a ubiquinone + NADH + 5 H(+)(in) = a ubiquinol + NAD(+) + 4 H(+)(out). Its function is as follows. Core subunit of the mitochondrial membrane respiratory chain NADH dehydrogenase (Complex I) which catalyzes electron transfer from NADH through the respiratory chain, using ubiquinone as an electron acceptor. Part of the enzyme membrane arm which is embedded in the lipid bilayer and involved in proton translocation. This chain is NADH-ubiquinone oxidoreductase chain 4L (MT-ND4L), found in Echinops telfairi (Lesser hedgehog tenrec).